The sequence spans 211 residues: Small ribosomal subunit protein uS3c (211 aa).

Residues 39–109 (IREFAESRLP…NVALYVTKTQ (71 aa)) enclose the KH type-2 domain.

The protein belongs to the universal ribosomal protein uS3 family. Part of the 30S ribosomal subunit.

The protein resides in the plastid. It is found in the chloroplast. This chain is Small ribosomal subunit protein uS3c (rps3), found in Ostreococcus tauri.